A 172-amino-acid chain; its full sequence is HAD-like hydrolase superfamily protein P8B7.31 (172 aa).

D14 (nucleophile) is an active-site residue. 3 residues coordinate Mg(2+): D14, D16, and D137. Residue D16 is the Proton donor of the active site.

It belongs to the HAD-like hydrolase superfamily.

It is found in the cytoplasm. It localises to the nucleus. In Schizosaccharomyces pombe (strain 972 / ATCC 24843) (Fission yeast), this protein is HAD-like hydrolase superfamily protein P8B7.31.